The primary structure comprises 292 residues: Probable serine/threonine-protein kinase FPV226 (292 aa).

Positions 14–292 (WKIDKLIGCG…DLLRQLVNSL (279 aa)) constitute a Protein kinase domain. ATP contacts are provided by residues 20 to 28 (IGCGGFGCV) and lysine 43. Aspartate 147 functions as the Proton acceptor in the catalytic mechanism.

The protein belongs to the protein kinase superfamily. Ser/Thr protein kinase family. Poxviruses subfamily.

It carries out the reaction L-seryl-[protein] + ATP = O-phospho-L-seryl-[protein] + ADP + H(+). It catalyses the reaction L-threonyl-[protein] + ATP = O-phospho-L-threonyl-[protein] + ADP + H(+). The chain is Probable serine/threonine-protein kinase FPV226 from Vertebrata (FPV).